The chain runs to 1006 residues: Unconventional myosin-Id (1006 aa).

An N-acetylalanine modification is found at alanine 2. The 687-residue stretch at 9–695 folds into the Myosin motor domain; the sequence is FGKADFVLMD…TLFTLEELRA (687 aa). 102–109 provides a ligand contact to ATP; that stretch reads GESGAGKT. Position 200 is a phosphoserine (serine 200). A Phosphotyrosine modification is found at tyrosine 536. The tract at residues 572-594 is actin-binding; that stretch reads MIALVDNLASKEPYYVRCIKPND. IQ domains follow at residues 699–719 and 721–741; these read VRVV…MRYK and TKAA…SYIH. The 194-residue stretch at 812-1005 folds into the TH1 domain; the sequence is GQRADLGLQR…RSGFILSVPG (194 aa).

This sequence belongs to the TRAFAC class myosin-kinesin ATPase superfamily. Myosin family. In terms of assembly, interacts (via the two IQ motifs) with calmodulin. Binds an additional calmodulin chain via a third, C-terminal region. Interacts with F-actin. In terms of tissue distribution, detected in enterocytes at the intestinal brush border membrane. Detected at the tip of intestinal microvilli (at protein level).

It localises to the cytoplasm. It is found in the perikaryon. The protein localises to the cell projection. Its subcellular location is the dendrite. The protein resides in the early endosome. It localises to the cell cortex. It is found in the basolateral cell membrane. In terms of biological role, unconventional myosin that functions as actin-based motor protein with ATPase activity. Plays a role in endosomal protein trafficking, and especially in the transfer of cargo proteins from early to recycling endosomes. Required for normal planar cell polarity in ciliated tracheal cells, for normal rotational polarity of cilia, and for coordinated, unidirectional ciliary movement in the trachea. Required for normal, polarized cilia organization in brain ependymal epithelial cells. The polypeptide is Unconventional myosin-Id (Mus musculus (Mouse)).